A 215-amino-acid polypeptide reads, in one-letter code: MSIGILGKKLGMSQFFDDEGRAVPVTVIEAGPCRITQVKTPTNDGYSAVQVGFGDVREKLVNQPAKGHLKKSGEDLLRHLKEYRVDSTDGVELGSSVTVDAFEPGQKVDVSGDTMGRGFSGYQKRHGFSRGPMTHGSKNHREPGSTGAGTTPGRIYPGKRMAGRYGGTKTTVKGLVVLKVDSERNLLVVKGSVPGKPGALLSIRPAVRVGAKATA.

A disordered region spans residues 124–164 (KRHGFSRGPMTHGSKNHREPGSTGAGTTPGRIYPGKRMAGR).

It belongs to the universal ribosomal protein uL3 family. Part of the 50S ribosomal subunit. Forms a cluster with proteins L14 and L19.

One of the primary rRNA binding proteins, it binds directly near the 3'-end of the 23S rRNA, where it nucleates assembly of the 50S subunit. The chain is Large ribosomal subunit protein uL3 from Synechococcus sp. (strain RCC307).